The sequence spans 81 residues: Antimicrobial peptide D1 (81 aa).

An N-terminal signal peptide occupies residues 1 to 31 (MAKTVLGIHVTFLTLLFAVLLLNDVMYTPVE). 4 cysteine pairs are disulfide-bonded: Cys-34–Cys-81, Cys-45–Cys-66, Cys-51–Cys-75, and Cys-55–Cys-77.

Antimicrobial peptide probably active against fungi like B.sorokiniana, F.oxysporum, F.graminearum, F.avenaceum, B.cinerea, P.beta, P.infestans and P.debaryanum. The protein is Antimicrobial peptide D1 of Stellaria media (Common chickweed).